A 391-amino-acid chain; its full sequence is Polysialic acid biosynthesis protein P7 (391 aa).

May be involved in the synthesis of polysialic acid (PSA). The chain is Polysialic acid biosynthesis protein P7 (neuC) from Escherichia coli.